The primary structure comprises 390 residues: Ketoisovalerate reductase BEA2 (390 aa).

Residue glycine 70 to glycine 75 participates in NADP(+) binding. Lysine 285 serves as the catalytic Proton donor. Positions 289 and 293 each coordinate substrate.

The protein belongs to the ketopantoate reductase family.

It catalyses the reaction (R)-2-hydroxy-3-methylbutanoate + NADP(+) = 3-methyl-2-oxobutanoate + NADPH + H(+). Its activity is regulated as follows. The reductase activity is increased by Mg(2+) (195%), Ca(2+) (169%) and slightly increased by K(+) (123%). The reduction activity is inhibited by Fe(2+) and Co(2+), and almost totally inhibited by Cu(2+), Mn(2+), Zn(2+) and Fe(3+) (from 3% to 9% residual activity respectively). The chelating agent EDTA had little effect, suggesting Mg(2+) and Ca(2+) are not determining factors, though they could promote the reductase enzyme activity. Ketoisovalerate reductase; part of the gene cluster that mediates the biosynthesis of beauvericin (BEA), a non-ribosomal cyclic hexadepsipeptide that shows antibiotic, antifungal, insecticidal, and cancer cell antiproliferative and antihaptotactic activity. Ketoisovalerate reductase BEA2 catalyzes the NADPH-specific reduction of ketoisovaleric acid to hydroxyisovalerate, a precursor for beauvericin biosynthesis. The nonribosomal cyclodepsipeptide synthetase BEA1 then catalyzes the formation of beauvericin via condensation and cyclization of 3 dipeptidol monomers, each composed of one unit of hydroxyisovalerate and one unit of N-methyl-phenylalanine. This chain is Ketoisovalerate reductase BEA2, found in Gibberella intermedia (Bulb rot disease fungus).